Consider the following 155-residue polypeptide: MPINQKFYSYLVKRNGGEGEPEFRLPMGFIGITLFEIGILLFGWTARYKIFWFVPTIGSAIMGGGYIMTSNPLNMYVVDSYGIYSASASAGVKIFQLLLGAIFPLFAESLFRRLNYGWGCTLLAFILLACGCSLPILFKYGKQIRNLRPFDPSKY.

The next 4 helical transmembrane spans lie at 25-45 (LPMGFIGITLFEIGILLFGWT), 50-70 (IFWFVPTIGSAIMGGGYIMTS), 91-111 (GVKIFQLLLGAIFPLFAESLF), and 118-138 (WGCTLLAFILLACGCSLPILF).

The protein belongs to the major facilitator superfamily. CAR1 family.

The protein resides in the membrane. This is an uncharacterized protein from Schizosaccharomyces pombe (strain 972 / ATCC 24843) (Fission yeast).